Here is a 444-residue protein sequence, read N- to C-terminus: Glutamate-1-semialdehyde 2,1-aminomutase (444 aa).

Position 267 is an N6-(pyridoxal phosphate)lysine (lysine 267).

The protein belongs to the class-III pyridoxal-phosphate-dependent aminotransferase family. HemL subfamily. In terms of assembly, homodimer. Pyridoxal 5'-phosphate serves as cofactor.

Its subcellular location is the cytoplasm. The catalysed reaction is (S)-4-amino-5-oxopentanoate = 5-aminolevulinate. The protein operates within porphyrin-containing compound metabolism; protoporphyrin-IX biosynthesis; 5-aminolevulinate from L-glutamyl-tRNA(Glu): step 2/2. This Xylella fastidiosa (strain M12) protein is Glutamate-1-semialdehyde 2,1-aminomutase.